The chain runs to 154 residues: Low molecular weight protein-tyrosine-phosphatase PtpA (154 aa).

Catalysis depends on Cys8, which acts as the Nucleophile. Arg14 is a catalytic residue. Asp120 functions as the Proton donor in the catalytic mechanism.

This sequence belongs to the low molecular weight phosphotyrosine protein phosphatase family. In terms of assembly, interacts with host CORO1A. In terms of processing, phosphorylations at Tyr-122 and Tyr-123 are essential for phosphatase activity.

The protein resides in the secreted. It catalyses the reaction O-phospho-L-tyrosyl-[protein] + H2O = L-tyrosyl-[protein] + phosphate. In terms of biological role, secreted tyrosine phosphatase that plays a critical role during infection as a bacterial effector protein that counteracts host defenses. Required for intramacrophage survival. The sequence is that of Low molecular weight protein-tyrosine-phosphatase PtpA (ptpA) from Staphylococcus aureus (strain bovine RF122 / ET3-1).